Reading from the N-terminus, the 529-residue chain is Putative inorganic phosphate cotransporter (529 aa).

8 helical membrane-spanning segments follow: residues 37–57 (FATR…AYVM), 110–130 (YILS…GILA), 148–168 (VFAF…LCAV), 202–222 (AVYA…GLLA), 232–252 (SIFY…LIFV), 338–358 (LPYL…DWMI), 429–449 (FLMS…PIAA), and 466–486 (IVFF…NIFG). The tract at residues 495 to 529 (NPEDDEQKPALQTTVTTSPARLSNGSTAPAAISSS) is disordered. Residues 504–529 (ALQTTVTTSPARLSNGSTAPAAISSS) are compositionally biased toward polar residues.

The protein belongs to the major facilitator superfamily. Sodium/anion cotransporter family.

The protein localises to the membrane. Its function is as follows. May be an inorganic phosphate cotransporter. The sequence is that of Putative inorganic phosphate cotransporter (Picot) from Drosophila melanogaster (Fruit fly).